The sequence spans 407 residues: MTGRVCVLVMDSFGIGASLDAARYGDAGANTLVHIYEACKRGECDIDGVRKGPLMLPNLAGKGLYHAAMASSGLPFIDLSALAIPSGYYGYAVEQSLGKDTPSGHWEMAGVPVTFEWGYFPDKSYCFPEELISEFIKQCNLPGVLGEKHASGTIIIDELGEEHIRTGKPIVYTSADSVFQIAAHEEAFGLQRLYDICKIARNLVDKYQIGRVIARPFTGKPGSFKRTGNRKDYATPPPEKTLLDFLKEDGREVIAIGKIADIYAHQGVTQEIKADGNMALFDATLSAMKTAPQGSLVFTNFVDFDSSYGHRRDVAGYAHALEQFDVRLPELEALLQPDDMVFIAADHGCDPTFPGSDHTREHIPVLMFGPQVNSKFIGRRDCFADIGQSIAEHLQLSSPLTHGVSFL.

Residues aspartate 11, aspartate 305, histidine 310, aspartate 346, histidine 347, and histidine 358 each coordinate Mn(2+).

This sequence belongs to the phosphopentomutase family. Requires Mn(2+) as cofactor.

The protein localises to the cytoplasm. It catalyses the reaction 2-deoxy-alpha-D-ribose 1-phosphate = 2-deoxy-D-ribose 5-phosphate. It carries out the reaction alpha-D-ribose 1-phosphate = D-ribose 5-phosphate. Its pathway is carbohydrate degradation; 2-deoxy-D-ribose 1-phosphate degradation; D-glyceraldehyde 3-phosphate and acetaldehyde from 2-deoxy-alpha-D-ribose 1-phosphate: step 1/2. Functionally, isomerase that catalyzes the conversion of deoxy-ribose 1-phosphate (dRib-1-P) and ribose 1-phosphate (Rib-1-P) to deoxy-ribose 5-phosphate (dRib-5-P) and ribose 5-phosphate (Rib-5-P), respectively. The chain is Phosphopentomutase from Legionella pneumophila (strain Paris).